A 97-amino-acid chain; its full sequence is NADH-quinone oxidoreductase subunit K (97 aa).

A run of 3 helical transmembrane segments spans residues M1–Y21, I25–Y45, and V57–L77.

Belongs to the complex I subunit 4L family. As to quaternary structure, NDH-1 is composed of 14 different subunits. Subunits NuoA, H, J, K, L, M, N constitute the membrane sector of the complex.

The protein localises to the cell inner membrane. The catalysed reaction is a quinone + NADH + 5 H(+)(in) = a quinol + NAD(+) + 4 H(+)(out). NDH-1 shuttles electrons from NADH, via FMN and iron-sulfur (Fe-S) centers, to quinones in the respiratory chain. The immediate electron acceptor for the enzyme in this species is believed to be a menaquinone. Couples the redox reaction to proton translocation (for every two electrons transferred, four hydrogen ions are translocated across the cytoplasmic membrane), and thus conserves the redox energy in a proton gradient. This chain is NADH-quinone oxidoreductase subunit K, found in Cytophaga hutchinsonii (strain ATCC 33406 / DSM 1761 / CIP 103989 / NBRC 15051 / NCIMB 9469 / D465).